Reading from the N-terminus, the 350-residue chain is UDP-N-acetylenolpyruvoylglucosamine reductase (350 aa).

Residues 25–194 (VGPVARRLIT…LDVGGRSAPL (170 aa)) form the FAD-binding PCMH-type domain. R166 is a catalytic residue. S243 functions as the Proton donor in the catalytic mechanism. E342 is a catalytic residue.

It belongs to the MurB family. It depends on FAD as a cofactor.

It localises to the cytoplasm. The enzyme catalyses UDP-N-acetyl-alpha-D-muramate + NADP(+) = UDP-N-acetyl-3-O-(1-carboxyvinyl)-alpha-D-glucosamine + NADPH + H(+). Its pathway is cell wall biogenesis; peptidoglycan biosynthesis. Cell wall formation. The protein is UDP-N-acetylenolpyruvoylglucosamine reductase of Mycobacterium sp. (strain MCS).